Reading from the N-terminus, the 3907-residue chain is A-kinase anchor protein 9 (3907 aa).

A compositionally biased stretch (basic and acidic residues) spans 1-14 (MEDEERQKKLEAGK). The tract at residues 1-57 (MEDEERQKKLEAGKAKLAQFRQRKAQSDGQSPSKKQKKKRKTSSSKHDVSAHHDLNI) is disordered. Residues 34–44 (KKQKKKRKTSS) are compositionally biased toward basic residues. A compositionally biased stretch (basic and acidic residues) spans 45–56 (SKHDVSAHHDLN). Coiled coils occupy residues 152-902 (DSPT…ELHL), 932-1010 (EVVE…ENVQ), 1088-1173 (QPSE…QTMK), 1241-1268 (ELQD…EEYN), 1324-1380 (KLSS…ESTV), 1422-1447 (VKEE…VAKV), and 1573-1647 (SMDA…DNEN). Ser-153 is modified (phosphoserine). Ser-1327 bears the Phosphoserine mark. The span at 1682-1692 (STQTQNGNENQ) shows a compositional bias: low complexity. Residues 1682-1713 (STQTQNGNENQGEVEEQTFKEKELDRKPEDVP) form a disordered region. Over residues 1698–1711 (QTFKEKELDRKPED) the composition is skewed to basic and acidic residues. The residue at position 1765 (Ser-1765) is a Phosphoserine. Coiled-coil stretches lie at residues 1845–2443 (NISS…VEKI), 2532–2549 (ETEM…IVEE), 2591–2764 (QLRE…SKKA), 3061–3088 (LNCL…ADRR), 3120–3466 (ELLE…NLNE), and 3583–3685 (SLTE…NDSL). The interval 2542 to 2555 (NLQKIVEEKVAAAL) is PKA-RII subunit binding domain. Residues 3377–3405 (RQQMEKDRQVHRKTLQTEQEANTEGQKKM) are disordered. Residues Ser-3690, Ser-3842, Ser-3865, and Ser-3897 each carry the phosphoserine modification.

Interacts with the regulatory region of protein kinase N (PKN), protein phosphatase 2A (PP2A), protein phosphatase 1 (PP1) and the immature non-phosphorylated form of PKC epsilon. Interacts with CIP4 and FNBP1. Interacts with chloride intracellular channel proteins CLIC1, CLIC4 and CLIC5. CSNK1D binding promotes its centrosomal subcellular location. Interacts with GM130/GOLGA2; leading to recruitment to the Golgi apparatus. Interacts with KCNQ1; targets protein kinase A (PKA) catalytic and regulatory subunits and protein phosphatase 1 (PP1), to the heterodimer KCNQ1-KCNE1. Interacts with PDE4DIP isoform 13/MMG8/SMYLE; this interaction stabilizes both proteins. In complex with PDE4DIP isoform 13, recruits CAMSAP2 to the Golgi apparatus. Forms a pericentrosomal complex with CDK5RAP2, EB1/MAPRE1 and PDE4DIP isoform 13; within this complex, MAPRE1 binding to CDK5RAP2 may be mediated by PDE4DIP. Interacts with MAPRE1 and MAPRE3. Interacts (via C-terminus) with CAMSAP2; this interaction is much stronger in the presence of PDE4DIP isoform 13/MMG8/SMYLE. Interacts with CAMSAP3. Interacts (via C-terminus) with the gamma-tubulin ring complex (gamma-TuRC), composed of gamma-tubulin, TUBGCP2, TUBGCP3, TUBGCP4, TUBGCP5 and TUBGCP6. Widely expressed. Isoform 4: Highly expressed in skeletal muscle and in pancreas.

The protein localises to the golgi apparatus. The protein resides in the cytoplasm. It localises to the cytoskeleton. It is found in the microtubule organizing center. Its subcellular location is the centrosome. Scaffolding protein that assembles several protein kinases and phosphatases on the centrosome and Golgi apparatus. Required to maintain the integrity of the Golgi apparatus. Required for microtubule nucleation at the cis-side of the Golgi apparatus. Required for association of the centrosomes with the poles of the bipolar mitotic spindle during metaphase. In complex with PDE4DIP isoform 13/MMG8/SMYLE, recruits CAMSAP2 to the Golgi apparatus and tethers non-centrosomal minus-end microtubules to the Golgi, an important step for polarized cell movement. In complex with PDE4DIP isoform 13/MMG8/SMYLE, EB1/MAPRE1 and CDK5RAP2, contributes to microtubules nucleation and extension also from the centrosome to the cell periphery. Its function is as follows. Associated with the N-methyl-D-aspartate receptor and is specifically found in the neuromuscular junction (NMJ) as well as in neuronal synapses, suggesting a role in the organization of postsynaptic specializations. The protein is A-kinase anchor protein 9 (AKAP9) of Homo sapiens (Human).